The primary structure comprises 102 residues: C-X-C motif chemokine 10 (102 aa).

A signal peptide spans 1–19 (MNKSGFLIFCLILLTLSQG). R24 carries the citrulline modification. 2 disulfides stabilise this stretch: C28-C55 and C30-C72.

The protein belongs to the intercrine alpha (chemokine CxC) family. As to quaternary structure, monomer, dimer, and tetramer. Interacts with CXCR3 (via N-terminus).

It localises to the secreted. Pro-inflammatory cytokine that is involved in a wide variety of processes such as chemotaxis, differentiation, and activation of peripheral immune cells, regulation of cell growth, apoptosis and modulation of angiostatic effects. Plays thereby an important role during viral infections by stimulating the activation and migration of immune cells to the infected sites. Mechanistically, binding of CXCL10 to the CXCR3 receptor activates G protein-mediated signaling and results in downstream activation of phospholipase C-dependent pathway, an increase in intracellular calcium production and actin reorganization. In turn, recruitment of activated Th1 lymphocytes occurs at sites of inflammation. Activation of the CXCL10/CXCR3 axis also plays an important role in neurons in response to brain injury for activating microglia, the resident macrophage population of the central nervous system, and directing them to the lesion site. This recruitment is an essential element for neuronal reorganization. The sequence is that of C-X-C motif chemokine 10 (CXCL10) from Bos taurus (Bovine).